The following is a 255-amino-acid chain: NAD kinase (255 aa).

The Proton acceptor role is filled by Asp-44. Residues 44–45 (DG), His-49, 114–115 (NE), Asp-144, Ala-152, 155–160 (SAYNLS), and Gln-216 each bind NAD(+).

This sequence belongs to the NAD kinase family. A divalent metal cation serves as cofactor.

The protein localises to the cytoplasm. The enzyme catalyses NAD(+) + ATP = ADP + NADP(+) + H(+). Involved in the regulation of the intracellular balance of NAD and NADP, and is a key enzyme in the biosynthesis of NADP. Catalyzes specifically the phosphorylation on 2'-hydroxyl of the adenosine moiety of NAD to yield NADP. The polypeptide is NAD kinase (Rickettsia rickettsii (strain Iowa)).